The following is a 428-amino-acid chain: CinA-like protein (428 aa).

The protein belongs to the CinA family.

This Gemmatimonas aurantiaca (strain DSM 14586 / JCM 11422 / NBRC 100505 / T-27) protein is CinA-like protein.